The primary structure comprises 237 residues: N-alpha-acetyltransferase 40 (237 aa).

G2 carries N-myristoyl glycine lipidation. The region spanning 63 to 216 (SGLEPATVDW…EDCSYEILSR (154 aa)) is the N-acetyltransferase domain. Substrate-binding positions include Y85, 127–129 (DVE), and Y138. Acetyl-CoA contacts are provided by residues 140–142 (VQL) and 148–153 (RKGLGK). T174 lines the substrate pocket. N179 lines the acetyl-CoA pocket. S197 and Y211 together coordinate substrate.

It belongs to the acetyltransferase family. NAA40 subfamily.

Its subcellular location is the cytoplasm. The protein localises to the nucleus. It catalyses the reaction N-terminal L-seryl-[histone H4] + acetyl-CoA = N-terminal N(alpha)-acetyl-L-seryl-[histone H4] + CoA + H(+). It carries out the reaction N-terminal L-seryl-[histone H2A] + acetyl-CoA = N-terminal N(alpha)-acetyl-L-seryl-[histone H2A] + CoA + H(+). Its function is as follows. N-alpha-acetyltransferase that specifically mediates the acetylation of the N-terminal residues of histones H4 and H2A. In contrast to other N-alpha-acetyltransferase, has a very specific selectivity for histones H4 and H2A N-terminus and specifically recognizes the 'Ser-Gly-Arg-Gly sequence'. Acts as a negative regulator of apoptosis. May play a role in hepatic lipid metabolism. This Mus musculus (Mouse) protein is N-alpha-acetyltransferase 40.